A 615-amino-acid chain; its full sequence is MTIEEKLKLLPEKPGVYIMKDKSGKIIYVGKAVVLKNRVRQYFQNKEKQLPKVKVMLSHVEDFEYIVTDTELEALMLECNLIKKYKPKYNVLLKDDKNYPYIKVTVNEEYPRIMFTRRIEPDGAKYFGPYSSAFAVRETIKLVRKMFPIRTCNKNIEKDMGKVRECLYYHIGLCSAPCTNKINKEDYIKLVDQAVLFLDGKRDWLIQKLKEDMKKAAEELRFEEAARIRDQIFAIERTSEKQKVVSVGEDEQDIISMARSADISCIQVFFVRDGKLSGREHYYMKNTEGMERGEIISSFIKQFYEGAPYIPKEIITDVELDESELLSEWLSQKRGNKVFITIPVRGKKKELVDMVYQNALEALKNDISIREEISKDQVVLELSNLVGLDYAKRIEAYDISNTRGQDNVGSMVVFVDGKPKKSQYRKFNIKYVEGQDDYESMREVIERRFLHAIEEKELIEKGELEEDKAKFAEMPDLIFVDGGIGHVNAVLQVLSGLGISIPVYGMVKDSKHRTRGLVSPQGEIDIPMTTKAFRLIAQIQEEAHRFAITFHKEKQSKRFKSELLNIPGIGKKRAKALYDAFKSIEEIKRASVEDLKKVEGMNEKAAQAVYEYFRK.

The 80-residue stretch at 12–91 folds into the GIY-YIG domain; the sequence is EKPGVYIMKD…IKKYKPKYNV (80 aa). Residues 203–238 form the UVR domain; the sequence is DWLIQKLKEDMKKAAEELRFEEAARIRDQIFAIERT.

Belongs to the UvrC family. Interacts with UvrB in an incision complex.

The protein resides in the cytoplasm. The UvrABC repair system catalyzes the recognition and processing of DNA lesions. UvrC both incises the 5' and 3' sides of the lesion. The N-terminal half is responsible for the 3' incision and the C-terminal half is responsible for the 5' incision. This Thermoanaerobacter sp. (strain X514) protein is UvrABC system protein C.